Reading from the N-terminus, the 297-residue chain is tRNA(Ile)-lysidine synthase (297 aa).

16–21 (SGGSDS) lines the ATP pocket.

The protein belongs to the tRNA(Ile)-lysidine synthase family.

Its subcellular location is the cytoplasm. The enzyme catalyses cytidine(34) in tRNA(Ile2) + L-lysine + ATP = lysidine(34) in tRNA(Ile2) + AMP + diphosphate + H(+). Its function is as follows. Ligates lysine onto the cytidine present at position 34 of the AUA codon-specific tRNA(Ile) that contains the anticodon CAU, in an ATP-dependent manner. Cytidine is converted to lysidine, thus changing the amino acid specificity of the tRNA from methionine to isoleucine. The polypeptide is tRNA(Ile)-lysidine synthase (Mesomycoplasma hyopneumoniae (strain 232) (Mycoplasma hyopneumoniae)).